We begin with the raw amino-acid sequence, 164 residues long: 3-isopropylmalate dehydratase small subunit 1 (164 aa).

This sequence belongs to the LeuD family. LeuD type 2 subfamily. Heterodimer of LeuC and LeuD.

It carries out the reaction (2R,3S)-3-isopropylmalate = (2S)-2-isopropylmalate. It functions in the pathway amino-acid biosynthesis; L-leucine biosynthesis; L-leucine from 3-methyl-2-oxobutanoate: step 2/4. In terms of biological role, catalyzes the isomerization between 2-isopropylmalate and 3-isopropylmalate, via the formation of 2-isopropylmaleate. This Pyrococcus furiosus (strain ATCC 43587 / DSM 3638 / JCM 8422 / Vc1) protein is 3-isopropylmalate dehydratase small subunit 1 (leuD1).